Reading from the N-terminus, the 381-residue chain is Chymosin (381 aa).

Residues 1–16 (MRCLVVLLAALALSQA) form the signal peptide. The propeptide at 17–58 (SGITRIPLHKGKTLRKALKERGLLEDFLQRQQYAVSSKYSSL) is activation peptide. Positions 74–378 (YFGKIYIGTP…DRANNRVGLA (305 aa)) constitute a Peptidase A1 domain. Residue aspartate 92 is part of the active site. Residues cysteine 105 and cysteine 110 are joined by a disulfide bond. Residue asparagine 158 is glycosylated (N-linked (GlcNAc...) asparagine). Cysteine 265 and cysteine 269 are joined by a disulfide. The active site involves aspartate 274. Cysteine 308 and cysteine 341 are oxidised to a cystine. Asparagine 349 carries N-linked (GlcNAc...) asparagine glycosylation.

This sequence belongs to the peptidase A1 family.

The catalysed reaction is Broad specificity similar to that of pepsin A. Clots milk by cleavage of a single 104-Ser-Phe-|-Met-Ala-107 bond in kappa-chain of casein.. Functionally, chymosin is synthesized in the mucosa of the abomasum (fourth stomach) of young (unweaned) ruminants. The enzyme hydrolyzes casein to paracasein. The polypeptide is Chymosin (Camelus dromedarius (Dromedary)).